Consider the following 58-residue polypeptide: Small ribosomal subunit protein bS21 (58 aa).

Residues 30–58 are disordered; the sequence is SEVRKREHYEKPSVKRKKKSEAARKRKFK. The span at 31-42 shows a compositional bias: basic and acidic residues; sequence EVRKREHYEKPS. A compositionally biased stretch (basic residues) spans 43 to 58; it reads VKRKKKSEAARKRKFK.

The protein belongs to the bacterial ribosomal protein bS21 family.

The sequence is that of Small ribosomal subunit protein bS21 from Clostridium perfringens (strain ATCC 13124 / DSM 756 / JCM 1290 / NCIMB 6125 / NCTC 8237 / Type A).